The chain runs to 678 residues: PTS system glucose-specific EIICBA component (678 aa).

One can recognise a PTS EIIC type-1 domain in the interval lysine 3–aspartate 414. Transmembrane regions (helical) follow at residues leucine 16 to methionine 36, alanine 63 to leucine 83, valine 89 to leucine 109, valine 126 to alanine 146, phenylalanine 170 to tryptophan 190, leucine 211 to isoleucine 231, phenylalanine 273 to tyrosine 293, valine 303 to proline 323, leucine 329 to isoleucine 349, valine 355 to proline 375, and leucine 382 to isoleucine 402. Residues serine 425 to lysine 506 enclose the PTS EIIB type-1 domain. The active-site Phosphocysteine intermediate; for EIIB activity is the cysteine 447. Positions aspartate 547–asparagine 651 constitute a PTS EIIA type-1 domain. Histidine 599 (tele-phosphohistidine intermediate; for EIIA activity) is an active-site residue.

Its subcellular location is the cell membrane. The enzyme catalyses N(pros)-phospho-L-histidyl-[protein] + D-glucose(out) = D-glucose 6-phosphate(in) + L-histidyl-[protein]. The phosphoenolpyruvate-dependent sugar phosphotransferase system (sugar PTS), a major carbohydrate active transport system, catalyzes the phosphorylation of incoming sugar substrates concomitantly with their translocation across the cell membrane. This system is involved in glucose transport. The sequence is that of PTS system glucose-specific EIICBA component (ptsG) from Staphylococcus saprophyticus subsp. saprophyticus (strain ATCC 15305 / DSM 20229 / NCIMB 8711 / NCTC 7292 / S-41).